The sequence spans 568 residues: PTS system lactose-specific EIICB component (568 aa).

Positions 7–409 (LIEKGKPFFE…VVDTIIYYPF (403 aa)) constitute a PTS EIIC type-3 domain. Transmembrane regions (helical) follow at residues 30–50 (GFIAGMPVILFSSIFILIAYV), 62–82 (IETFLMTPYSYSMGILAFFVG), 103–123 (INFLSTMLASMVGFLLMAAEP), 128–148 (GFLTAFMGTKGLLTAFIAAFV), 183–203 (FTVSVVLLYGLELLVKGTLGV), 222–242 (GYLGITLIFGAYAFFWFVGIH), 283–303 (FIATMGGTGATLIVPFLFMWI), 339–359 (IFFVPFIFAPIVNVWIFKFFV), and 389–409 (VLSFILAGLLVVVDTIIYYPF). The region spanning 466–568 (ETNVLVLCAG…ALAFVQQQFD (103 aa)) is the PTS EIIB type-3 domain. Cys473 (phosphocysteine intermediate; for EIIB activity) is an active-site residue. Cys473 carries the phosphocysteine; by EIIA modification.

The protein localises to the cell membrane. It carries out the reaction lactose(out) + N(pros)-phospho-L-histidyl-[protein] = lactose 6-phosphate(in) + L-histidyl-[protein]. The phosphoenolpyruvate-dependent sugar phosphotransferase system (sugar PTS), a major carbohydrate active transport system, catalyzes the phosphorylation of incoming sugar substrates concomitantly with their translocation across the cell membrane. The enzyme II LacEF PTS system is involved in lactose transport. This is PTS system lactose-specific EIICB component from Lactococcus lactis subsp. lactis (Streptococcus lactis).